A 478-amino-acid polypeptide reads, in one-letter code: Ankyrin repeat and BTB/POZ domain-containing protein 1 (478 aa).

ANK repeat units follow at residues 1–31 (MDTSDLFASCRKGDVGRVRYLLEQRDVEVNV) and 35–64 (WDSTPLYYACLCGHEELVRYLLANGARCEA). BTB domains follow at residues 115–182 (SDVV…DIGV) and 272–346 (PDIC…ELPP). Residues 451–477 (VQTYSAIEEAQQRLRALEDLLVSIGLD) are a coiled coil.

It is found in the cytoplasm. May act as a mediator of the PTEN growth-suppressive signaling pathway. May play a role in developmental processes. The chain is Ankyrin repeat and BTB/POZ domain-containing protein 1 from Mus musculus (Mouse).